Consider the following 502-residue polypeptide: Membrane-bound lytic murein transglycosylase F (502 aa).

Positions 1-33 (MSRFISTFRSSSAQLSIVLAVILATGCSQPTTL) are cleaved as a signal peptide. The segment at 34–264 (QEIREEGVLH…QLAERFYGHL (231 aa)) is non-LT domain. Residues 265-502 (DRLNYVGART…PELRLIPPTL (238 aa)) form an LT domain region. The active site involves E311. A disordered region spans residues 457-502 (PSASGLEDQLAWLGDNEAGPEAPAKESQPDLRADLPPELRLIPPTL). Basic and acidic residues predominate over residues 479–493 (PAKESQPDLRADLPP).

In the N-terminal section; belongs to the bacterial solute-binding protein 3 family. The protein in the C-terminal section; belongs to the transglycosylase Slt family.

The protein localises to the cell outer membrane. It catalyses the reaction Exolytic cleavage of the (1-&gt;4)-beta-glycosidic linkage between N-acetylmuramic acid (MurNAc) and N-acetylglucosamine (GlcNAc) residues in peptidoglycan, from either the reducing or the non-reducing ends of the peptidoglycan chains, with concomitant formation of a 1,6-anhydrobond in the MurNAc residue.. Functionally, murein-degrading enzyme that degrades murein glycan strands and insoluble, high-molecular weight murein sacculi, with the concomitant formation of a 1,6-anhydromuramoyl product. Lytic transglycosylases (LTs) play an integral role in the metabolism of the peptidoglycan (PG) sacculus. Their lytic action creates space within the PG sacculus to allow for its expansion as well as for the insertion of various structures such as secretion systems and flagella. The chain is Membrane-bound lytic murein transglycosylase F from Marinobacter nauticus (strain ATCC 700491 / DSM 11845 / VT8) (Marinobacter aquaeolei).